A 245-amino-acid chain; its full sequence is 4-hydroxy-tetrahydrodipicolinate reductase (245 aa).

Residues 7–12 (GAKGKV), 75–77 (GTT), and 102–105 (APNF) each bind NAD(+). The Proton donor/acceptor role is filled by H132. H133 lines the (S)-2,3,4,5-tetrahydrodipicolinate pocket. K136 acts as the Proton donor in catalysis. Position 142 to 143 (142 to 143 (GT)) interacts with (S)-2,3,4,5-tetrahydrodipicolinate.

This sequence belongs to the DapB family.

It is found in the cytoplasm. It catalyses the reaction (S)-2,3,4,5-tetrahydrodipicolinate + NAD(+) + H2O = (2S,4S)-4-hydroxy-2,3,4,5-tetrahydrodipicolinate + NADH + H(+). The enzyme catalyses (S)-2,3,4,5-tetrahydrodipicolinate + NADP(+) + H2O = (2S,4S)-4-hydroxy-2,3,4,5-tetrahydrodipicolinate + NADPH + H(+). It participates in amino-acid biosynthesis; L-lysine biosynthesis via DAP pathway; (S)-tetrahydrodipicolinate from L-aspartate: step 4/4. Its function is as follows. Catalyzes the conversion of 4-hydroxy-tetrahydrodipicolinate (HTPA) to tetrahydrodipicolinate. The chain is 4-hydroxy-tetrahydrodipicolinate reductase from Mycobacterium sp. (strain KMS).